The following is a 461-amino-acid chain: Photosystem II CP43 reaction center protein (461 aa).

The propeptide occupies 1–2 (ME). At T3 the chain carries N-acetylthreonine. T3 carries the phosphothreonine modification. 5 helical membrane passes run 57–81 (LFEV…PHIA), 122–143 (LIGP…KDKN), 166–188 (KAMY…RIIT), 243–263 (TPWP…LSYS), and 279–300 (WFNN…ASQA). Residue E355 coordinates [CaMn4O5] cluster. The helical transmembrane segment at 435 to 459 (RARAAAAGFEKGIDRVDEPVLSMRP) threads the bilayer.

Belongs to the PsbB/PsbC family. PsbC subfamily. In terms of assembly, PSII is composed of 1 copy each of membrane proteins PsbA, PsbB, PsbC, PsbD, PsbE, PsbF, PsbH, PsbI, PsbJ, PsbK, PsbL, PsbM, PsbT, PsbX, PsbY, PsbZ, Psb30/Ycf12, at least 3 peripheral proteins of the oxygen-evolving complex and a large number of cofactors. It forms dimeric complexes. The cofactor is Binds multiple chlorophylls and provides some of the ligands for the Ca-4Mn-5O cluster of the oxygen-evolving complex. It may also provide a ligand for a Cl- that is required for oxygen evolution. PSII binds additional chlorophylls, carotenoids and specific lipids..

Its subcellular location is the plastid. It localises to the chloroplast thylakoid membrane. In terms of biological role, one of the components of the core complex of photosystem II (PSII). It binds chlorophyll and helps catalyze the primary light-induced photochemical processes of PSII. PSII is a light-driven water:plastoquinone oxidoreductase, using light energy to abstract electrons from H(2)O, generating O(2) and a proton gradient subsequently used for ATP formation. This is Photosystem II CP43 reaction center protein from Chlamydomonas moewusii (Chlamydomonas eugametos).